Reading from the N-terminus, the 215-residue chain is Pyrrolidone-carboxylate peptidase (215 aa).

Residues Glu-80, Cys-143, and His-167 contribute to the active site.

The protein belongs to the peptidase C15 family. Homotetramer.

The protein resides in the cytoplasm. The catalysed reaction is Release of an N-terminal pyroglutamyl group from a polypeptide, the second amino acid generally not being Pro.. Removes 5-oxoproline from various penultimate amino acid residues except L-proline. The sequence is that of Pyrrolidone-carboxylate peptidase from Bacillus cereus (strain G9842).